The following is a 429-amino-acid chain: 3-phosphoshikimate 1-carboxyvinyltransferase (429 aa).

3-phosphoshikimate-binding residues include K22, S23, and R27. K22 serves as a coordination point for phosphoenolpyruvate. 2 residues coordinate phosphoenolpyruvate: G94 and R122. The 3-phosphoshikimate site is built by S167, Q169, D315, and K342. Q169 provides a ligand contact to phosphoenolpyruvate. D315 serves as the catalytic Proton acceptor. Phosphoenolpyruvate-binding residues include R346 and R388.

The protein belongs to the EPSP synthase family. In terms of assembly, monomer.

The protein resides in the cytoplasm. It carries out the reaction 3-phosphoshikimate + phosphoenolpyruvate = 5-O-(1-carboxyvinyl)-3-phosphoshikimate + phosphate. It functions in the pathway metabolic intermediate biosynthesis; chorismate biosynthesis; chorismate from D-erythrose 4-phosphate and phosphoenolpyruvate: step 6/7. Functionally, catalyzes the transfer of the enolpyruvyl moiety of phosphoenolpyruvate (PEP) to the 5-hydroxyl of shikimate-3-phosphate (S3P) to produce enolpyruvyl shikimate-3-phosphate and inorganic phosphate. This chain is 3-phosphoshikimate 1-carboxyvinyltransferase, found in Geobacter metallireducens (strain ATCC 53774 / DSM 7210 / GS-15).